Here is a 214-residue protein sequence, read N- to C-terminus: EEF1A lysine methyltransferase 1 (214 aa).

Position 2 is an N-acetylserine (Ser2). Residue Ser2 is modified to Phosphoserine.

The protein belongs to the class I-like SAM-binding methyltransferase superfamily. EFM5 family.

It localises to the cytoplasm. The enzyme catalyses L-lysyl-[protein] + 3 S-adenosyl-L-methionine = N(6),N(6),N(6)-trimethyl-L-lysyl-[protein] + 3 S-adenosyl-L-homocysteine + 3 H(+). In terms of biological role, protein-lysine methyltransferase that selectively catalyzes the trimethylation of EEF1A at 'Lys-79'. In Mus musculus (Mouse), this protein is EEF1A lysine methyltransferase 1.